The primary structure comprises 391 residues: Beta sliding clamp (391 aa).

Belongs to the beta sliding clamp family. In terms of assembly, forms a ring-shaped head-to-tail homodimer around DNA which binds and tethers DNA polymerases and other proteins to the DNA. The DNA replisome complex has a single clamp-loading complex (3 tau and 1 each of delta, delta', psi and chi subunits) which binds 3 Pol III cores (1 core on the leading strand and 2 on the lagging strand) each with a beta sliding clamp dimer. Additional proteins in the replisome are other copies of gamma, psi and chi, Ssb, DNA helicase and RNA primase.

It localises to the cytoplasm. Confers DNA tethering and processivity to DNA polymerases and other proteins. Acts as a clamp, forming a ring around DNA (a reaction catalyzed by the clamp-loading complex) which diffuses in an ATP-independent manner freely and bidirectionally along dsDNA. Initially characterized for its ability to contact the catalytic subunit of DNA polymerase III (Pol III), a complex, multichain enzyme responsible for most of the replicative synthesis in bacteria; Pol III exhibits 3'-5' exonuclease proofreading activity. The beta chain is required for initiation of replication as well as for processivity of DNA replication. In Synechocystis sp. (strain ATCC 27184 / PCC 6803 / Kazusa), this protein is Beta sliding clamp (dnaN).